Reading from the N-terminus, the 909-residue chain is MAPVRAPTARHRLVARRRLREGGFQTPNGASIQFPLPAYPWQSPLLGPEGNLLIENGDNKNETSGDVDPAKATKADLFPYGVAAKITGVEGRGTGEFTLLVEGVTRIHVEKVIADKAYLEGKVSSYADPALITDSALEELFMSLKLLSRQFVTILRLSSLLPQSSGTPGLSPLLARRLDFYIAKQKYPGALADFMANIVESTYEEKLQILTLIDVKERVAKVIELLDRQVTNIKNSMKITTITATSLPFPMDPDSTKPGKVKPPVKAPGQGVGMPFPPQGGFMGRGGNPDDEQEPNEIEELQKRLDAARLSPEAAKIADREIKRLKKIHPAQAEYAVTRTYLETLAEIPWTATTDDRLGPDTLNRARKQLDDDHYGLDKVKKRLLEYLAVLRLKQAINDDVDIQIKQIEQELGVGSENGKEDAAQPAAVDLTVDEKVKAGGAKLEALKNRRMVDKSPILLLVGPPGVGKTSLARSVATALGRKFHRISLGGVRDEAEIRGHRRTYVAAMPGLVVQGLKKVGVANPVFLLDEIDKVGGSSIHGDPSAAMLEVLDPEQNHNFTDHYVNIPIDLSKVLFIATANSLDTIPAPLLDRMETIYIPGYTTLEKRHIAMQHLVPKQLRVNGLDESQVSFTPEVVSKIIESYTREAGVRNLEREISSVARGKAVEFADAKDSGHPENYNPQLTVDDLEKFLGIEKFEEEIAEKTSRPGIVTGLVAYSSGGNGSILFIEVADMPGNGSVQLTGKLGDVLKESVEVALTWVKAHAYELGLTQSPNENIMKDRSIHVHCPSGAVPKDGPSSGISQAIALISLFSGKAVPSTMAMTGEISLRGRITAVGGIKEKLIGALRAGVKTVLLPAQNRKDVKDLPQEVKDGLEIIHVSHIWEAIRYVWPDGQWPSEHDYPSVESRL.

In terms of domain architecture, Lon N-terminal spans 1–230; it reads MAPVRAPTAR…KVIELLDRQV (230 aa). The disordered stretch occupies residues 249–269; the sequence is FPMDPDSTKPGKVKPPVKAPG. 463–470 serves as a coordination point for ATP; it reads GPPGVGKT. Residues 706–893 enclose the Lon proteolytic domain; sequence TSRPGIVTGL…WEAIRYVWPD (188 aa). Active-site residues include Ser799 and Lys842. The Microbody targeting signal motif lies at 907 to 909; that stretch reads SRL.

The protein belongs to the peptidase S16 family.

The protein resides in the peroxisome matrix. The protein localises to the cytoplasm. The catalysed reaction is Hydrolysis of proteins in presence of ATP.. In terms of biological role, ATP-dependent serine protease that mediates the selective degradation of misfolded and unassembled polypeptides in the peroxisomal matrix. Necessary for type 2 peroxisome targeting signal (PTS2)-containing protein processing and facilitates peroxisome matrix protein import. The chain is Lon protease homolog 2, peroxisomal from Sordaria macrospora (strain ATCC MYA-333 / DSM 997 / K(L3346) / K-hell).